Here is a 233-residue protein sequence, read N- to C-terminus: Large ribosomal subunit protein uL1 (233 aa).

It belongs to the universal ribosomal protein uL1 family. As to quaternary structure, part of the 50S ribosomal subunit.

Its function is as follows. Binds directly to 23S rRNA. The L1 stalk is quite mobile in the ribosome, and is involved in E site tRNA release. In terms of biological role, protein L1 is also a translational repressor protein, it controls the translation of the L11 operon by binding to its mRNA. This Vibrio cholerae serotype O1 (strain ATCC 39541 / Classical Ogawa 395 / O395) protein is Large ribosomal subunit protein uL1.